Reading from the N-terminus, the 259-residue chain is BTB/POZ domain-containing protein KCTD4 (259 aa).

The segment at 1–22 (MEHKINRREKEKDYEGKHNSLE) is disordered. Residues 33-134 (TLMTLNVGGY…EVKSRWEKEQ (102 aa)) enclose the BTB domain.

In Bos taurus (Bovine), this protein is BTB/POZ domain-containing protein KCTD4 (KCTD4).